Reading from the N-terminus, the 160-residue chain is Cyanate hydratase (160 aa).

Residues Arg-100, Glu-103, and Ser-126 contribute to the active site.

It belongs to the cyanase family.

It catalyses the reaction cyanate + hydrogencarbonate + 3 H(+) = NH4(+) + 2 CO2. Functionally, catalyzes the reaction of cyanate with bicarbonate to produce ammonia and carbon dioxide. This is Cyanate hydratase from Emericella nidulans (strain FGSC A4 / ATCC 38163 / CBS 112.46 / NRRL 194 / M139) (Aspergillus nidulans).